Reading from the N-terminus, the 142-residue chain is Large ribosomal subunit protein uL11 (142 aa).

Belongs to the universal ribosomal protein uL11 family. In terms of assembly, part of the ribosomal stalk of the 50S ribosomal subunit. Interacts with L10 and the large rRNA to form the base of the stalk. L10 forms an elongated spine to which L12 dimers bind in a sequential fashion forming a multimeric L10(L12)X complex. Post-translationally, one or more lysine residues are methylated.

Its function is as follows. Forms part of the ribosomal stalk which helps the ribosome interact with GTP-bound translation factors. In Vibrio vulnificus (strain CMCP6), this protein is Large ribosomal subunit protein uL11.